Here is a 904-residue protein sequence, read N- to C-terminus: Structural polyprotein (904 aa).

Disordered stretches follow at residues 1–27 (ADQE…VETE), 35–54 (VETP…SARS), and 320–348 (NNSN…KIGP). Over residues 39–53 (NRINTPMAQDTSSAR) the composition is skewed to polar residues. The span at 329-343 (VKEKTKNIPKPKTEN) shows a compositional bias: basic and acidic residues.

It belongs to the picornaviruses polyprotein family. Post-translationally, specific enzymatic cleavages in vivo yield mature proteins.

Its subcellular location is the virion. It is found in the host cytoplasm. Functionally, structural polyprotein: precursor of all the viral capsid proteins. Forms, together with protein VP2 and protein VP3, an icosahedral capsid protecting the viral RNA genome. The icosahedral capsid has a pseudo-T=3 symmetry with a diameter of approximately 300 Angstroms, and is composed of 60 copies of each capsid proteins. In terms of biological role, forms, together with protein VP1 and protein VP3, an icosahedral capsid protecting the viral RNA genome. The icosahedral capsid has a pseudo-T=3 symmetry with a diameter of approximately 300 Angstroms, and is composed of 60 copies of each capsid proteins. Its function is as follows. Forms, together with protein VP1 and protein VP2, an icosahedral capsid protecting the viral RNA genome. The icosahedral capsid has a pseudo-T=3 symmetry with a diameter of approximately 300 Angstroms, and is composed of 60 copies of each capsid proteins. In Apis mellifera (Honeybee), this protein is Structural polyprotein.